Consider the following 350-residue polypeptide: Nicotinate-nucleotide--dimethylbenzimidazole phosphoribosyltransferase (350 aa).

Glu-317 (proton acceptor) is an active-site residue.

Belongs to the CobT family.

It carries out the reaction 5,6-dimethylbenzimidazole + nicotinate beta-D-ribonucleotide = alpha-ribazole 5'-phosphate + nicotinate + H(+). The protein operates within nucleoside biosynthesis; alpha-ribazole biosynthesis; alpha-ribazole from 5,6-dimethylbenzimidazole: step 1/2. Catalyzes the synthesis of alpha-ribazole-5'-phosphate from nicotinate mononucleotide (NAMN) and 5,6-dimethylbenzimidazole (DMB). This is Nicotinate-nucleotide--dimethylbenzimidazole phosphoribosyltransferase from Shewanella oneidensis (strain ATCC 700550 / JCM 31522 / CIP 106686 / LMG 19005 / NCIMB 14063 / MR-1).